Consider the following 201-residue polypeptide: MSCLFVISAPSGAGKTSVIRTLLQTDINLTLSISYTTRPPRRDEKNGHDYFFVDHATFKDMQARGEFLESAEVHGNLYGTSRKWIEETMAAEQDVLLEIDCQGAQQIRTVYPQAASIFILPPSMEALKQRLEQRGQDENKVIERRLAAARSEISHVNRFDYVVVNHELETAARDVASIVQAERLKTIRQLVRQRSLIAEFS.

The 179-residue stretch at 2 to 180 (SCLFVISAPS…AARDVASIVQ (179 aa)) folds into the Guanylate kinase-like domain. Residue 9–16 (APSGAGKT) participates in ATP binding.

Belongs to the guanylate kinase family.

It is found in the cytoplasm. It carries out the reaction GMP + ATP = GDP + ADP. Its function is as follows. Essential for recycling GMP and indirectly, cGMP. The sequence is that of Guanylate kinase from Nitrosomonas europaea (strain ATCC 19718 / CIP 103999 / KCTC 2705 / NBRC 14298).